Reading from the N-terminus, the 690-residue chain is Methionine--tRNA ligase (690 aa).

A 'HIGH' region motif is present at residues Pro-12–His-22. Zn(2+) is bound by residues Cys-143, Cys-146, Cys-156, and Cys-159. Residues Lys-328–Ser-332 carry the 'KMSKS' region motif. Lys-331 contributes to the ATP binding site. The tRNA-binding domain maps to Asp-582–Lys-690.

The protein belongs to the class-I aminoacyl-tRNA synthetase family. MetG type 1 subfamily. As to quaternary structure, homodimer. Zn(2+) serves as cofactor.

It localises to the cytoplasm. The catalysed reaction is tRNA(Met) + L-methionine + ATP = L-methionyl-tRNA(Met) + AMP + diphosphate. In terms of biological role, is required not only for elongation of protein synthesis but also for the initiation of all mRNA translation through initiator tRNA(fMet) aminoacylation. In Thiobacillus denitrificans (strain ATCC 25259 / T1), this protein is Methionine--tRNA ligase.